We begin with the raw amino-acid sequence, 257 residues long: MAPCLLLVLFLLPALATGHQHPSTLGSSALSEWRSAKASYYAADPEDAIGGACGFGDLGKHGYGMATVGLSTALFERGAACGGCYEVKCVDDLKYCLPGTSIVVTATNFCAPNFGLPADAGGVCNPPNHHFLLPIQSFEKIALWKAGVMPIQYRRVNCLRDGGVRFAVAGRSFFLTVLISNVGGAGDVRSVKIKGTESGWLSMGRNWGQIWHINSDFRGQPLSFELTSSDGKTLTNYNVVPKEWDFGKTYTGKQFLL.

The signal sequence occupies residues 1–18 (MAPCLLLVLFLLPALATG). Positions 50-163 (GGACGFGDLG…RRVNCLRDGG (114 aa)) constitute an Expansin-like EG45 domain. The Expansin-like CBD domain maps to 173 to 252 (FFLTVLISNV…EWDFGKTYTG (80 aa)).

This sequence belongs to the expansin family. Expansin A subfamily. In terms of tissue distribution, expressed in panicles and flowers.

It is found in the secreted. The protein localises to the cell wall. The protein resides in the membrane. In terms of biological role, may cause loosening and extension of plant cell walls by disrupting non-covalent bonding between cellulose microfibrils and matrix glucans. No enzymatic activity has been found. May be required for rapid internodal elongation in deepwater rice during submergence. In Oryza sativa subsp. japonica (Rice), this protein is Expansin-A10 (EXPA10).